Consider the following 878-residue polypeptide: Glycogen [starch] synthase (878 aa).

Lysine 61 contacts UDP-alpha-D-glucose. Disordered stretches follow at residues 637 to 721 and 746 to 878; these read PPKP…NVIP and NEFK…KSLK. 2 stretches are compositionally biased toward low complexity: residues 641-656 and 666-676; these read ISRS…LKLS and QQQQQQQQPQP. The span at 677 to 692 shows a compositional bias: polar residues; it reads IGTTINLIPPSSNVSV. Composition is skewed to low complexity over residues 693-715, 746-781, 795-830, and 838-878; these read TPTT…ITTP, NEFK…AAAT, PNTS…NGKP, and TKSN…KSLK.

Belongs to the glycosyltransferase 3 family.

The enzyme catalyses [(1-&gt;4)-alpha-D-glucosyl](n) + UDP-alpha-D-glucose = [(1-&gt;4)-alpha-D-glucosyl](n+1) + UDP + H(+). Its pathway is glycan biosynthesis; glycogen biosynthesis. Catalyzes the formation of apha-1,4 glycosidic bonds adding glucose residue from UDPG to the growing chain of glycogen. The protein is Glycogen [starch] synthase (glcS) of Dictyostelium discoideum (Social amoeba).